Reading from the N-terminus, the 338-residue chain is Protein FosB (338 aa).

Disordered stretches follow at residues 1–54 and 80–162; these read MFQA…PGSF and AQSQ…RVRR. A compositionally biased stretch (polar residues) spans 13–31; the sequence is SRCSSSPSAESQYLSSVDS. S27 is subject to Phosphoserine. The span at 113-124 shows a compositional bias: gly residues; the sequence is SSGGASGSGGPS. A compositionally biased stretch (low complexity) spans 125-137; it reads TSGTTSGPGPARP. Residues 155–218 form the bZIP domain; the sequence is EEKRRVRRER…ERLEFVLVAH (64 aa). The basic motif stretch occupies residues 157–182; that stretch reads KRRVRRERNKLAAAKCRNRRRELTDR. Positions 183–211 are leucine-zipper; it reads LQAETDQLEEEKAELESEIAELQKEKERL. 2 disordered regions span residues 222–271 and 315–338; these read CKIP…TSQD and AGTQ…LLAL. The span at 256 to 265 shows a compositional bias: pro residues; it reads LPPPPAPPLP. Residues 318-338 show a composition bias toward polar residues; it reads QRPSGSDQPTDPLNSPSLLAL.

This sequence belongs to the bZIP family. Fos subfamily. Heterodimer; binds to DNA as heterodimer. Component of an AP-1 transcription factor complex; composed of FOS-JUN heterodimers. As part of the AP-1 transcription factor complex, forms heterodimers with JUN, JUNB or JUND, thereby binding to the AP-1 consensus sequence and stimulating transcription. Interacts with the BAF multiprotein chromatin-remodeling complex subunits SMARCB1 and SMARCD1. Interacts with ARID1A and JUN. Phosphorylated.

Its subcellular location is the nucleus. Functionally, heterodimerizes with proteins of the JUN family to form an AP-1 transcription factor complex, thereby enhancing their DNA binding activity to an AP-1 consensus sequence 5'-TGA[GC]TCA-3' and enhancing their transcriptional activity. Exhibits transactivation activity in vitro. As part of the AP-1 complex, facilitates enhancer selection together with cell-type-specific transcription factors by collaboratively binding to nucleosomal enhancers and recruiting the SWI/SNF (BAF) chromatin remodeling complex to establish accessible chromatin. Together with JUN, plays a role in activation-induced cell death of T cells by binding to the AP-1 promoter site of FASLG/CD95L, and inducing its transcription in response to activation of the TCR/CD3 signaling pathway. Involved in the display of nurturing behavior towards newborns. May play a role in neurogenesis in the hippocampus and in learning and memory-related tasks by regulating the expression of various genes involved in neurogenesis, depression and epilepsy. Implicated in behavioral responses related to morphine reward and spatial memory. The sequence is that of Protein FosB (FOSB) from Canis lupus familiaris (Dog).